The following is a 248-amino-acid chain: MGKRDNRVAYMNPIAMARWRGPTQSVGPTIQDYLNRPRPTWEEVKKQLENKKTGSKALAEFEEKMNENWKKELEKSREKLLSGNESSSKKRERKKKRKKKSCRSSSSSSSSDSSSSSSDSEDEEKKQGKRRKKKKNRSYKSSQSSTHESESESKESVKKKKKSKDETEKEKDVRSLSKKRKKSYPDDKPLSSESSSESDYEEDVQAKKKRRCEEREQAKEKVKKKKKKQHKKHSKKKKKKSGSSHKSR.

Over residues 68 to 80 (NWKKELEKSREKL) the composition is skewed to basic and acidic residues. The segment at 68 to 248 (NWKKELEKSR…KKSGSSHKSR (181 aa)) is disordered. Residues 90–102 (KRERKKKRKKKSC) show a composition bias toward basic residues. The span at 103–118 (RSSSSSSSSDSSSSSS) shows a compositional bias: low complexity. Over residues 127–138 (QGKRRKKKKNRS) the composition is skewed to basic residues. Basic and acidic residues-rich tracts occupy residues 147–156 (HESESESKES), 163–175 (SKDETEKEKDVRS), and 211–220 (RCEEREQAKE). Basic residues predominate over residues 221 to 248 (KVKKKKKKQHKKHSKKKKKKSGSSHKSR).

The protein belongs to the FAM133 family.

The polypeptide is Protein FAM133A (FAM133A) (Homo sapiens (Human)).